A 337-amino-acid polypeptide reads, in one-letter code: Glyceraldehyde-3-phosphate dehydrogenase (337 aa).

Residues 12 to 13 (RI), Asp34, and Arg79 contribute to the NAD(+) site. Residues 150 to 152 (SCT), Thr181, 210 to 211 (TG), and Arg233 each bind D-glyceraldehyde 3-phosphate. The Nucleophile role is filled by Cys151. Residue Asn315 coordinates NAD(+).

It belongs to the glyceraldehyde-3-phosphate dehydrogenase family. Homotetramer.

Its subcellular location is the cytoplasm. It carries out the reaction D-glyceraldehyde 3-phosphate + phosphate + NAD(+) = (2R)-3-phospho-glyceroyl phosphate + NADH + H(+). The protein operates within carbohydrate degradation; glycolysis; pyruvate from D-glyceraldehyde 3-phosphate: step 1/5. The polypeptide is Glyceraldehyde-3-phosphate dehydrogenase (GPD) (Coccidioides immitis (strain RS) (Valley fever fungus)).